The chain runs to 562 residues: RNA N(6)-adenosine-methyltransferase METTL16 (562 aa).

Residues 17–20 (PPDF) form an RNA-binding region. Residues R82, G110, S114, E133, T164, and N184 each contribute to the S-adenosyl-L-methionine site. The interval 163–167 (KTLLM) is K-loop. 3 RNA-binding regions span residues 199-211 (SRNP…SSVN), 250-254 (GKKCS), and 277-283 (QGRTMRW). The interval 289–400 (FYDDVTVPSP…QLREVPRAPE (112 aa)) is VCR 1. S329 carries the phosphoserine modification. Over residues 402-413 (VIQALEEKKPTP) the composition is skewed to basic and acidic residues. Residues 402 to 498 (VIQALEEKKP…DQEASEQFGS (97 aa)) form a disordered region. Acidic residues predominate over residues 458–467 (ENPEPTEDER). Phosphothreonine is present on T463. Positions 480–496 (CQGSSNGAQDQEASEQF) are enriched in polar residues. The segment at 514 to 562 (YLFKCLINVKKEVDDALVEMHWVEGQNRDLMNQLCTYIRNQIFRLVAVN) is VCR 2.

Belongs to the methyltransferase superfamily. METTL16/RlmF family. In terms of assembly, interacts with MEPCE. Interacts with LARP7.

The protein resides in the nucleus. It is found in the cytoplasm. It catalyses the reaction adenosine in U6 snRNA + S-adenosyl-L-methionine = N(6)-methyladenosine in U6 snRNA + S-adenosyl-L-homocysteine + H(+). The enzyme catalyses an adenosine in mRNA + S-adenosyl-L-methionine = an N(6)-methyladenosine in mRNA + S-adenosyl-L-homocysteine + H(+). Its activity is regulated as follows. Methyltransferase activity is autoinhibited by the K-loop region that blocks S-adenosyl-L-methionine-binding. Upon activation, K-loop changes conformation, allowing S-adenosyl-L-methionine-binding and subsequent methyltransferase activity. mRNA N6-adenosine-methyltransferase activity is inhibited by zinc. RNA N6-methyltransferase that methylates adenosine residues at the N(6) position of a subset of RNAs and is involved in S-adenosyl-L-methionine homeostasis by regulating expression of MAT2A transcripts. Able to N6-methylate a subset of mRNAs and U6 small nuclear RNAs (U6 snRNAs). In contrast to the METTL3-METTL14 heterodimer, only able to methylate a limited number of RNAs: requires both a 5'UACAGAGAA-3' nonamer sequence and a specific RNA structure. Plays a key role in S-adenosyl-L-methionine homeostasis by mediating N6-methylation of MAT2A mRNAs, altering splicing of MAT2A transcripts: in presence of S-adenosyl-L-methionine, binds the 3'-UTR region of MAT2A mRNA and specifically N6-methylates the first hairpin of MAT2A mRNA, preventing recognition of their 3'-splice site by U2AF1/U2AF35, thereby inhibiting splicing and protein production of S-adenosylmethionine synthase. In S-adenosyl-L-methionine-limiting conditions, binds the 3'-UTR region of MAT2A mRNA but stalls due to the lack of a methyl donor, preventing N6-methylation and promoting expression of MAT2A. In addition to mRNAs, also able to mediate N6-methylation of U6 small nuclear RNA (U6 snRNA): specifically N6-methylates adenine in position 43 of U6 snRNAs. Also able to bind various lncRNAs, such as 7SK snRNA (7SK RNA) or 7SL RNA. Specifically binds the 3'-end of the MALAT1 long non-coding RNA. The sequence is that of RNA N(6)-adenosine-methyltransferase METTL16 from Homo sapiens (Human).